A 224-amino-acid polypeptide reads, in one-letter code: Viral late gene transcription factor 3 (224 aa).

A zinc finger spans residues 6–26 (CSGCRHNGIVSEQGYEYCIFC).

The protein belongs to the orthopoxvirus VLTF-3/OPG127 family. In terms of assembly, interacts with the late transcription elongation factor VLTF-4/OPG110. Interacts with the late transcription factors VLTF-1/OPG093.

Acts with RNA polymerase to initiate transcription from late gene promoters. The chain is Viral late gene transcription factor 3 (OPG127) from Vaccinia virus (strain Ankara) (VACV).